The following is a 266-amino-acid chain: Non-structural maintenance of chromosomes element 1 homolog (266 aa).

Residues 1–102 form an interaction with NSMCE3 region; that stretch reads MQGSTRRAGA…SVSKMATDFA (102 aa). The segment at 191–232 adopts an RING-type; atypical zinc-finger fold; sequence CNICHGLLIQGQSCETCGIRMHLPCVAKYFQSIPEPHCPHCN. A disordered region spans residues 246-266; the sequence is EKEREAGISKSSRKSLRTRQH. The segment covering 256-266 has biased composition (basic residues); the sequence is SSRKSLRTRQH.

This sequence belongs to the NSE1 family. In terms of assembly, component of the SMC5-SMC6 complex which consists at least of SMC5, SMC6, NSMCE2, NSMCE1, NSMCE4A or EID3 and NSMCE3. NSMCE1, NSMCE4A or EID3 and NSMCE3 probably form a subcomplex that bridges the head domains of the SMC5-SMC6 heterodimer. Interacts with NSMCE3. Post-translationally, ubiquitinated.

The protein localises to the nucleus. It is found in the chromosome. It localises to the telomere. The enzyme catalyses S-ubiquitinyl-[E2 ubiquitin-conjugating enzyme]-L-cysteine + [acceptor protein]-L-lysine = [E2 ubiquitin-conjugating enzyme]-L-cysteine + N(6)-ubiquitinyl-[acceptor protein]-L-lysine.. Its function is as follows. RING-type zinc finger-containing E3 ubiquitin ligase that assembles with melanoma antigen protein (MAGE) to catalyze the direct transfer of ubiquitin from E2 ubiquitin-conjugating enzyme to a specific substrate. Within MAGE-RING ubiquitin ligase complex, MAGE stimulates and specifies ubiquitin ligase activity likely through recruitment and/or stabilization of the E2 ubiquitin-conjugating enzyme at the E3:substrate complex. Involved in maintenance of genome integrity, DNA damage response and DNA repair. NSMCE3/MAGEG1 and NSMCE1 ubiquitin ligase are components of SMC5-SMC6 complex and may positively regulate homologous recombination-mediated DNA repair. The sequence is that of Non-structural maintenance of chromosomes element 1 homolog (Nsmce1) from Mus musculus (Mouse).